The primary structure comprises 461 residues: GTPase Der (461 aa).

EngA-type G domains lie at 9 to 171 and 200 to 371; these read KTIA…DLNQ and IQVG…ECFS. GTP contacts are provided by residues 15-22, 62-66, 123-126, 206-213, 253-257, and 317-320; these read GQPNVGKS, DTGGM, NKID, GRVNVGKS, DTAGI, and NKWD. The KH-like domain maps to 372–456; sequence KRIPTSLLNS…PLILNAKDKK (85 aa).

This sequence belongs to the TRAFAC class TrmE-Era-EngA-EngB-Septin-like GTPase superfamily. EngA (Der) GTPase family. Associates with the 50S ribosomal subunit.

Functionally, GTPase that plays an essential role in the late steps of ribosome biogenesis. This is GTPase Der from Helicobacter pylori (strain Shi470).